The chain runs to 307 residues: Elongation factor Ts (307 aa).

Residues 79–82 form an involved in Mg(2+) ion dislocation from EF-Tu region; that stretch reads TDFV.

Belongs to the EF-Ts family.

Its subcellular location is the cytoplasm. Functionally, associates with the EF-Tu.GDP complex and induces the exchange of GDP to GTP. It remains bound to the aminoacyl-tRNA.EF-Tu.GTP complex up to the GTP hydrolysis stage on the ribosome. In Bartonella bacilliformis (strain ATCC 35685 / KC583 / Herrer 020/F12,63), this protein is Elongation factor Ts.